We begin with the raw amino-acid sequence, 496 residues long: Aspartyl/glutamyl-tRNA(Asn/Gln) amidotransferase subunit B (496 aa).

It belongs to the GatB/GatE family. GatB subfamily. In terms of assembly, heterotrimer of A, B and C subunits.

It carries out the reaction L-glutamyl-tRNA(Gln) + L-glutamine + ATP + H2O = L-glutaminyl-tRNA(Gln) + L-glutamate + ADP + phosphate + H(+). The catalysed reaction is L-aspartyl-tRNA(Asn) + L-glutamine + ATP + H2O = L-asparaginyl-tRNA(Asn) + L-glutamate + ADP + phosphate + 2 H(+). Its function is as follows. Allows the formation of correctly charged Asn-tRNA(Asn) or Gln-tRNA(Gln) through the transamidation of misacylated Asp-tRNA(Asn) or Glu-tRNA(Gln) in organisms which lack either or both of asparaginyl-tRNA or glutaminyl-tRNA synthetases. The reaction takes place in the presence of glutamine and ATP through an activated phospho-Asp-tRNA(Asn) or phospho-Glu-tRNA(Gln). This chain is Aspartyl/glutamyl-tRNA(Asn/Gln) amidotransferase subunit B, found in Xanthobacter autotrophicus (strain ATCC BAA-1158 / Py2).